The primary structure comprises 449 residues: Glucose-6-phosphate isomerase (449 aa).

Glu-290 (proton donor) is an active-site residue. Residues His-311 and Lys-425 contribute to the active site.

Belongs to the GPI family.

It localises to the cytoplasm. It carries out the reaction alpha-D-glucose 6-phosphate = beta-D-fructose 6-phosphate. The protein operates within carbohydrate biosynthesis; gluconeogenesis. It functions in the pathway carbohydrate degradation; glycolysis; D-glyceraldehyde 3-phosphate and glycerone phosphate from D-glucose: step 2/4. Its function is as follows. Catalyzes the reversible isomerization of glucose-6-phosphate to fructose-6-phosphate. The chain is Glucose-6-phosphate isomerase from Clostridioides difficile (strain 630) (Peptoclostridium difficile).